The following is a 543-amino-acid chain: T-complex protein 1 subunit eta (543 aa).

Met-1 carries the N-acetylmethionine modification. Residue Gly-41 coordinates ADP. Gly-41 is a binding site for ATP. An N6-acetyllysine modification is found at Lys-67. Mg(2+) is bound at residue Asp-92. Residues Gly-93, Thr-94, Thr-95, Ser-96, Ser-164, and Ser-165 each coordinate ADP. Gly-93 provides a ligand contact to ATP. Ser-96 serves as a coordination point for ATP. Lys-250 and Lys-320 each carry N6-acetyllysine. ATP contacts are provided by Arg-398 and Gly-409. Residue Gly-409 coordinates ADP. Lys-430 participates in a covalent cross-link: Glycyl lysine isopeptide (Lys-Gly) (interchain with G-Cter in SUMO2). Residues Glu-494 and Arg-499 each coordinate ADP. Arg-499 contacts ATP. The interval 524–543 (RSTVDAPTAAGRGRGRGRPH) is disordered. Arg-535 is modified (omega-N-methylarginine).

The protein belongs to the TCP-1 chaperonin family. As to quaternary structure, component of the chaperonin-containing T-complex (TRiC), a hexadecamer composed of two identical back-to-back stacked rings enclosing a protein folding chamber. Each ring is made up of eight different subunits: TCP1/CCT1, CCT2, CCT3, CCT4, CCT5, CCT6A/CCT6, CCT7, CCT8. Interacts with PACRG. Interacts with DLEC1.

Its subcellular location is the cytoplasm. The enzyme catalyses ATP + H2O = ADP + phosphate + H(+). Functionally, component of the chaperonin-containing T-complex (TRiC), a molecular chaperone complex that assists the folding of actin, tubulin and other proteins upon ATP hydrolysis. The TRiC complex mediates the folding of WRAP53/TCAB1, thereby regulating telomere maintenance. The sequence is that of T-complex protein 1 subunit eta (CCT7) from Homo sapiens (Human).